Consider the following 774-residue polypeptide: Transcription factor MBS1 (774 aa).

Residues 37 to 143 (EITFYDSGVP…YVPTSVSPPP (107 aa)) enclose the HTH APSES-type domain. A DNA-binding region (H-T-H motif) is located at residues 68–89 (ATQILKVAGFDKPQRTRVLERE). Disordered regions lie at residues 135–180 (VPTS…SAAA) and 209–229 (RVSLTPEDDSSSDTPSPVASV). Positions 155–165 (ARRDKEKETGR) are enriched in basic and acidic residues. A compositionally biased stretch (polar residues) spans 166–176 (TKATPSRTGPT). 2 ANK repeats span residues 348 to 377 (DGHTALHWACAMGRVRVVKLLLTAGASIFA) and 467 to 496 (EGETALTIAARARSRRLVKALLDHGANPKI). The segment at 752–774 (EEENDNQVYNTSAGESGPSSWVQ) is disordered. The span at 757 to 774 (NQVYNTSAGESGPSSWVQ) shows a compositional bias: polar residues.

Its subcellular location is the nucleus. In terms of biological role, transcription factor that positively regulates ergosterol biosynthesis and thereby affects polyene and azole drug susceptibility. Plays a role in maintenance of membrane stability and osmotic stress response. Involved in genotoxic and oxidative stress responses. Also promotes production of melanin and capsule and thereby is required for full virulence. The sequence is that of Transcription factor MBS1 from Cryptococcus neoformans var. grubii serotype A (strain H99 / ATCC 208821 / CBS 10515 / FGSC 9487) (Filobasidiella neoformans var. grubii).